Here is a 73-residue protein sequence, read N- to C-terminus: RNA-binding protein Hfq (73 aa).

The Sm domain maps to 8–68 (DQFLNQIRKE…ISTFAPQKNV (61 aa)).

It belongs to the Hfq family. As to quaternary structure, homohexamer.

RNA chaperone that binds small regulatory RNA (sRNAs) and mRNAs to facilitate mRNA translational regulation in response to envelope stress, environmental stress and changes in metabolite concentrations. Also binds with high specificity to tRNAs. This Bacillus subtilis (strain 168) protein is RNA-binding protein Hfq.